A 658-amino-acid chain; its full sequence is CXXC-type zinc finger protein 1 (658 aa).

Met-1 bears the N-acetylmethionine mark. The segment covering 1 to 14 has biased composition (acidic residues); that stretch reads MEGDASDPEPPDAG. The segment at 1-20 is disordered; that stretch reads MEGDASDPEPPDAGEDSKSE. 2 positions are modified to phosphoserine: Ser-6 and Ser-19. Residues 28 to 76 form a PHD-type zinc finger; the sequence is YCICRKPDINCFMIGCDNCNEWFHGDCIRITEKMAKAIREWYCRECREK. The interval 84-164 is disordered; that stretch reads YRHKKSRERD…HQQQQQQQQI (81 aa). Basic and acidic residues predominate over residues 90–120; that stretch reads RERDSSERDGSEPRDEGGGRKRPAPDPDLQR. A compositionally biased stretch (low complexity) spans 153–163; the sequence is QHHQQQQQQQQ. The CXXC-type zinc-finger motif lies at 162 to 211; it reads QQIKRSARMCGECEACRRTEDCGHCDFCRDMKKFGGPNKIRQKCRLRQCQ. Zn(2+) contacts are provided by Cys-171, Cys-174, Cys-177, Cys-183, Cys-186, Cys-189, Cys-205, and Cys-210. 2 disordered regions span residues 221–285 and 327–373; these read FPSS…SDED and VKVK…DPAS. The residue at position 226 (Ser-226) is a Phosphoserine. Thr-229 carries the post-translational modification Phosphothreonine. Residue Lys-252 forms a Glycyl lysine isopeptide (Lys-Gly) (interchain with G-Cter in SUMO2) linkage. Over residues 327–336 the composition is skewed to basic residues; sequence VKVKHVKRRE. The span at 337 to 347 shows a compositional bias: basic and acidic residues; that stretch reads KKSEKKKDERY. The segment covering 348-360 has biased composition (basic residues); the sequence is KRHRQKQKHKDKW. The span at 361–370 shows a compositional bias: basic and acidic residues; sequence KHPERADAKD. Residues 428-470 adopt a coiled-coil conformation; the sequence is GKKLLERIRREQQSARTRLQEMERRFHELEAIILRAKQQAVRE.

In terms of assembly, component of the SET1 complex, at least composed of the catalytic subunit (SETD1A or SETD1B), WDR5, WDR82, RBBP5, ASH2L/ASH2, CXXC1/CFP1, HCFC1 and DPY30. Interacts with SETD1A. Interacts with ZNF335. Interacts with PRDM9; this interaction does not link PRDM9-activated recombination hotspot sites with DSB machinery and is not required for the hotspot recognition pathway. Interacts with histone H3K4me3. Post-translationally, may be regulated by proteolysis.

It localises to the nucleus speckle. Its subcellular location is the nucleus. Transcriptional activator that exhibits a unique DNA binding specificity for CpG unmethylated motifs with a preference for CpGG. The sequence is that of CXXC-type zinc finger protein 1 (CXXC1) from Bos taurus (Bovine).